Here is a 182-residue protein sequence, read N- to C-terminus: Small ribosomal subunit protein uS4c (182 aa).

The S4 RNA-binding domain occupies 82-143 (MRLDNILFRL…KQRSKALIQN (62 aa)).

The protein belongs to the universal ribosomal protein uS4 family. Part of the 30S ribosomal subunit. Contacts protein S5. The interaction surface between S4 and S5 is involved in control of translational fidelity.

Its subcellular location is the plastid. The protein localises to the chloroplast. One of the primary rRNA binding proteins, it binds directly to 16S rRNA where it nucleates assembly of the body of the 30S subunit. Functionally, with S5 and S12 plays an important role in translational accuracy. The sequence is that of Small ribosomal subunit protein uS4c (rps4) from Isophysis tasmanica.